We begin with the raw amino-acid sequence, 448 residues long: Inositol hexakisphosphate kinase 2 (448 aa).

ATP-binding positions include 229 to 231 (ENL) and Asp-242. Residues 238 to 246 (PCVLDLKMG), Lys-244, and 258 to 265 (KAANQIRK) contribute to the substrate site. Asp-405 serves as a coordination point for ATP. His-408 contributes to the substrate binding site.

It belongs to the inositol phosphokinase (IPK) family. In terms of tissue distribution, highly expressed in brain and lung, and at slightly lower levels in liver, kidney and testis.

The protein localises to the nucleus. It catalyses the reaction 1D-myo-inositol hexakisphosphate + ATP = 5-diphospho-1D-myo-inositol 1,2,3,4,6-pentakisphosphate + ADP. It participates in phospholipid metabolism; phosphatidylinositol metabolism. Functionally, converts inositol hexakisphosphate (InsP6) to diphosphoinositol pentakisphosphate (InsP7/PP-InsP5). May play a role in the regulation of Na(+)-dependent phosphate cotransport, possibly via its role in diphosphoinositol pentakisphosphate (InsP7/PP-InsP5) biosynthesis. In Mus musculus (Mouse), this protein is Inositol hexakisphosphate kinase 2 (Ip6k2).